The following is a 56-amino-acid chain: Large ribosomal subunit protein bL33 (56 aa).

Belongs to the bacterial ribosomal protein bL33 family.

The chain is Large ribosomal subunit protein bL33 from Haemophilus influenzae (strain 86-028NP).